Reading from the N-terminus, the 247-residue chain is Probable transcriptional regulatory protein Spro_2779 (247 aa).

The protein belongs to the TACO1 family.

Its subcellular location is the cytoplasm. The sequence is that of Probable transcriptional regulatory protein Spro_2779 from Serratia proteamaculans (strain 568).